The sequence spans 335 residues: Beta-ketoacyl-[acyl-carrier-protein] synthase III (335 aa).

Catalysis depends on residues Cys-119 and His-261. The segment at 262–266 (QANQR) is ACP-binding. The active site involves Asn-291.

It belongs to the thiolase-like superfamily. FabH family. In terms of assembly, homodimer.

It localises to the cytoplasm. It carries out the reaction malonyl-[ACP] + acetyl-CoA + H(+) = 3-oxobutanoyl-[ACP] + CO2 + CoA. It participates in lipid metabolism; fatty acid biosynthesis. Its function is as follows. Catalyzes the condensation reaction of fatty acid synthesis by the addition to an acyl acceptor of two carbons from malonyl-ACP. Catalyzes the first condensation reaction which initiates fatty acid synthesis and may therefore play a role in governing the total rate of fatty acid production. Possesses both acetoacetyl-ACP synthase and acetyl transacylase activities. Its substrate specificity determines the biosynthesis of branched-chain and/or straight-chain of fatty acids. In Prochlorococcus marinus (strain MIT 9301), this protein is Beta-ketoacyl-[acyl-carrier-protein] synthase III.